The following is a 588-amino-acid chain: MQTPKRRRGAQGCPRSSPSPPLLLLVGAVWFCAALSVAAGSFELTILHTNDVHARVEQTSRDSGKCTGQDCYGGVARRATKIRELRANHSHVLLLDAGDQYQGTIWFSFFKGREVVKFMNSLGYDAMALGNHEFDNGLAGLLDPLLKHANFPILSANIRPKGSIASNISGYILPYKIINVGSEKVGIIGYTTKETPVLSNPGPYLEFRDEVEELQKHANKLTTLGVNKIIALGHSGFFEDQRIARKVKGVDVVVGGHTNTFLYTGSPPSTEVAAGNYPFMVKSDDGRQVPVVQAYAFGKYLGYLNVIFDDKGNVIKSSGNPILLNKNISEDQDVKAEVNKMKIQLHNYSSQEIGKTIVYLNGTTQACRFHECNLGNLICDAVIYNNVRHPDYNEWNHVSMCIVNGGGIRSPIDERANNGTITLEELTAVLPFGGTFDLLQIKGCALKQAFEHSVHRHGQGMGELLQVSGIKVVYDLSRKPGSRVVSLNVLCTECRVPTYVPLEKEKTYKLLLPSFLAGGGDGYHMLKGDSSNHSSGNLDISIVGDYIKRMGKVFPAVEGRVIFSAGTLFQAQLFLTWGLCISLLYFIL.

The first 40 residues, 1 to 40 (MQTPKRRRGAQGCPRSSPSPPLLLLVGAVWFCAALSVAAG), serve as a signal peptide directing secretion. Residues D51 and H53 each coordinate Zn(2+). C66 and C71 are disulfide-bonded. N-linked (GlcNAc...) asparagine glycosylation is present at N88. Residues D99 and N131 each contribute to the Zn(2+) site. N167 carries N-linked (GlcNAc...) asparagine glycosylation. Zn(2+)-binding residues include H234 and H257. N-linked (GlcNAc...) asparagine glycosylation is found at N327, N347, and N361. 2 cysteine pairs are disulfide-bonded: C367/C372 and C379/C401. Position 368 (R368) interacts with AMP. AMP is bound by residues N404 and R409. N418 carries an N-linked (GlcNAc...) asparagine glycan. Residue F432 participates in AMP binding. The cysteines at positions 491 and 494 are disulfide-linked. Residues F515 and D521 each contribute to the AMP site. N-linked (GlcNAc...) asparagine glycosylation occurs at N532. S564 carries the GPI-anchor amidated serine lipid modification. The propeptide at 565-588 (AGTLFQAQLFLTWGLCISLLYFIL) is removed in mature form.

Belongs to the 5'-nucleotidase family. Zn(2+) is required as a cofactor. Venom 5'-nucleotidases (or a part thereof) may be released into the venom via exosome-like vesicles. They may be attached via a GPI anchor to the membrane of these vesicles. Soluble forms of 5'-nucleotidase might be released by cleavage of the ectodomain in the exosome-like vesicles or venom gland cells. Expressed by the venom gland.

The protein localises to the membrane. It catalyses the reaction a ribonucleoside 5'-phosphate + H2O = a ribonucleoside + phosphate. Functionally, hydrolyzes nucleotides into nucleosides. Snake venom 5'-nucleotidases are widely distributed among venomous snake taxa, but there is a lack of information about their biological activities. They have been shown to inhibit platelet aggregation. This effect may be due to the liberation of inhibitory AMP or adenosine by its action on ADP released upon initiation of aggregation. Venom 5'-nucleotidases are also known to synergistically act in vivo with other toxins like ADPases, phospholipases, and disintegrins to exert a more pronounced anti-coagulant effect. The sequence is that of Snake venom 5'-nucleotidase from Gloydius brevicauda (Korean slamosa snake).